The primary structure comprises 467 residues: NADH-quinone oxidoreductase subunit H (467 aa).

9 consecutive transmembrane segments (helical) span residues 18–38 (WWLV…TVLF), 88–108 (AVYV…IAVI), 131–151 (LPIA…GIVL), 172–192 (MISY…YSGS), 206–226 (WYIV…VGET), 256–276 (FMLA…TLFL), 296–316 (WWPL…FIWL), 328–348 (LMKL…MLVA), and 363–383 (IALY…LVDM). Positions 389 to 467 (GKAADQPAET…PTDGKEASDG (79 aa)) are disordered. The span at 418–430 (PVPPMPGQQVPPV) shows a compositional bias: pro residues.

The protein belongs to the complex I subunit 1 family. NDH-1 is composed of 14 different subunits. Subunits NuoA, H, J, K, L, M, N constitute the membrane sector of the complex.

It localises to the cell membrane. The catalysed reaction is a quinone + NADH + 5 H(+)(in) = a quinol + NAD(+) + 4 H(+)(out). Its function is as follows. NDH-1 shuttles electrons from NADH, via FMN and iron-sulfur (Fe-S) centers, to quinones in the respiratory chain. The immediate electron acceptor for the enzyme in this species is believed to be ubiquinone. Couples the redox reaction to proton translocation (for every two electrons transferred, four hydrogen ions are translocated across the cytoplasmic membrane), and thus conserves the redox energy in a proton gradient. This subunit may bind ubiquinone. In Streptomyces coelicolor (strain ATCC BAA-471 / A3(2) / M145), this protein is NADH-quinone oxidoreductase subunit H.